Here is a 121-residue protein sequence, read N- to C-terminus: UPF0295 protein ABC1323 (121 aa).

Helical transmembrane passes span 14-34 and 41-61; these read TFAL…IFFK and VIAM…YFFI.

Belongs to the UPF0295 family.

Its subcellular location is the cell membrane. In Shouchella clausii (strain KSM-K16) (Alkalihalobacillus clausii), this protein is UPF0295 protein ABC1323.